Here is a 54-residue protein sequence, read N- to C-terminus: Large ribosomal subunit protein bL33 (54 aa).

This sequence belongs to the bacterial ribosomal protein bL33 family.

The protein is Large ribosomal subunit protein bL33 of Chloroflexus aurantiacus (strain ATCC 29366 / DSM 635 / J-10-fl).